The following is a 426-amino-acid chain: Histidine--tRNA ligase (426 aa).

This sequence belongs to the class-II aminoacyl-tRNA synthetase family. Homodimer.

Its subcellular location is the cytoplasm. It catalyses the reaction tRNA(His) + L-histidine + ATP = L-histidyl-tRNA(His) + AMP + diphosphate + H(+). This is Histidine--tRNA ligase from Streptococcus agalactiae serotype Ia (strain ATCC 27591 / A909 / CDC SS700).